Here is a 1014-residue protein sequence, read N- to C-terminus: Calcium-transporting ATPase 2, plasma membrane-type (1014 aa).

Met1 carries the post-translational modification N-acetylmethionine. The Cytoplasmic segment spans residues 1–160 (MESYLNENFD…NKFAESEMRG (160 aa)). The tract at residues 20–31 (VLEKWRNLCGVV) is interaction with calmodulin. At Ser45 the chain carries Phosphoserine; by CPK1. The chain crosses the membrane as a helical span at residues 161 to 181 (FWVFVWEALQDMTLMILGVCA). Topologically, residues 182–199 (FVSLIVGIATEGWPKGSH) are lumenal. Residues 200 to 220 (DGLGIAASILLVVFVTATSDY) form a helical membrane-spanning segment. At 221-348 (RQSLQFRDLD…DDETPLQVKL (128 aa)) the chain is on the cytoplasmic side. Residues 349-368 (NGVATIIGKIGLFFAVVTFA) form a helical membrane-spanning segment. Residues 369–398 (VLVQGMFMRKLSTGTHWVWSGDEALELLEY) lie on the Lumenal side of the membrane. Residues 399–416 (FAIAVTIVVVAVPEGLPL) traverse the membrane as a helical segment. Residues 417–810 (AVTLSLAFAM…KWGRSVYINI (394 aa)) are Cytoplasmic-facing. Catalysis depends on Asp454, which acts as the 4-aspartylphosphate intermediate. Residues Asp755 and Asp759 each contribute to the Mg(2+) site. Residues 811–829 (QKFVQFQLTVNVVALVVNF) traverse the membrane as a helical segment. Topologically, residues 830-840 (SSACLTGSAPL) are lumenal. Residues 841-861 (TAVQLLWVNMIMDTLGALALA) form a helical membrane-spanning segment. Over 862-881 (TEPPNDELMKRLPVGRRGNF) the chain is Cytoplasmic. The helical transmembrane segment at 882 to 904 (ITNAMWRNILGQAVYQFIVIWIL) threads the bilayer. Over 905–916 (QAKGKAMFGLDG) the chain is Lumenal. Residues 917-938 (PDSTLMLNTLIFNCFVFCQVFN) traverse the membrane as a helical segment. Over 939–956 (EISSREMEEIDVFKGILD) the chain is Cytoplasmic. Residues 957–978 (NYVFVVVIGATVFFQIIIIEFL) form a helical membrane-spanning segment. At 979–988 (GTFASTTPLT) the chain is on the lumenal side. A helical membrane pass occupies residues 989 to 1010 (ITQWIFSIFIGFLGMPIAAGLK). At 1011-1014 (TIPV) the chain is on the cytoplasmic side.

The protein belongs to the cation transport ATPase (P-type) (TC 3.A.3) family. Type IIB subfamily.

It is found in the endoplasmic reticulum membrane. The catalysed reaction is Ca(2+)(in) + ATP + H2O = Ca(2+)(out) + ADP + phosphate + H(+). Activated by calmodulin. Functionally, this magnesium-dependent enzyme catalyzes the hydrolysis of ATP coupled with the translocation of calcium from the cytosol into the endoplasmic reticulum. The protein is Calcium-transporting ATPase 2, plasma membrane-type (ACA2) of Arabidopsis thaliana (Mouse-ear cress).